The sequence spans 235 residues: Rab-like protein 3 (235 aa).

Residues 1–235 (MASLDRVKVL…GGNFKSLHYD (235 aa)) form a small GTPase-like region. GTP is bound by residues 16–21 (GVGKSS), 148–150 (KLD), and 179–180 (DC).

It belongs to the small GTPase superfamily. Rab family. Homodimer.

Functionally, required for KRAS signaling regulation and modulation of cell proliferation. Regulator of KRAS prenylation, and probably prenylation of other small GTPases. Required for lymphocyte development and function. Not required for myeloid cell development. This Xenopus laevis (African clawed frog) protein is Rab-like protein 3 (rabl3).